The chain runs to 262 residues: Acyl-[acyl-carrier-protein]--UDP-N-acetylglucosamine O-acyltransferase (262 aa).

The protein belongs to the transferase hexapeptide repeat family. LpxA subfamily. In terms of assembly, homotrimer.

Its subcellular location is the cytoplasm. It catalyses the reaction a (3R)-hydroxyacyl-[ACP] + UDP-N-acetyl-alpha-D-glucosamine = a UDP-3-O-[(3R)-3-hydroxyacyl]-N-acetyl-alpha-D-glucosamine + holo-[ACP]. It participates in glycolipid biosynthesis; lipid IV(A) biosynthesis; lipid IV(A) from (3R)-3-hydroxytetradecanoyl-[acyl-carrier-protein] and UDP-N-acetyl-alpha-D-glucosamine: step 1/6. Its function is as follows. Involved in the biosynthesis of lipid A, a phosphorylated glycolipid that anchors the lipopolysaccharide to the outer membrane of the cell. The protein is Acyl-[acyl-carrier-protein]--UDP-N-acetylglucosamine O-acyltransferase of Paraburkholderia phymatum (strain DSM 17167 / CIP 108236 / LMG 21445 / STM815) (Burkholderia phymatum).